Reading from the N-terminus, the 312-residue chain is Olfactory receptor 2M7 (312 aa).

The Extracellular portion of the chain corresponds to 1-25 (MAWENQTFNSDFLLLGIFNHSPTHT). A glycan (N-linked (GlcNAc...) asparagine) is linked at Asn-5. A helical transmembrane segment spans residues 26-49 (FLFFLVLAIFSVAFMGNSIMVLLI). Residues 50-57 (YLDTQLHT) lie on the Cytoplasmic side of the membrane. The helical transmembrane segment at 58 to 79 (PMYFLLSQLSLMDLMLICTTVP) threads the bilayer. Topologically, residues 80–100 (KMAFNYLSGSKSISMAGCATQ) are extracellular. Residues Cys-97 and Cys-189 are joined by a disulfide bond. Residues 101-120 (IFFYISLLGSECFLLAVMSY) traverse the membrane as a helical segment. The Cytoplasmic segment spans residues 121–139 (DRYTAICHPLRYTNLMRPK). Residues 140 to 158 (ICGLMTAFSWILGSTDGII) traverse the membrane as a helical segment. The Extracellular portion of the chain corresponds to 159–195 (DAVATFSFSYCGSREIAHFCCDFPSLLILSCNDTSIF). Residues 196-219 (EEVIFICCIVMLVFPVAIIITSYA) traverse the membrane as a helical segment. Topologically, residues 220-236 (RVILAVIHMGSGEGRRK) are cytoplasmic. A helical membrane pass occupies residues 237–259 (AFTTCSSHLMVVGMYYGAGLFMC). Residues 260–272 (IQPTSHHSPMQDK) are Extracellular-facing. A helical membrane pass occupies residues 273-292 (MVSVFYTIVTPMLNPLIYSL). At 293-311 (RNKEVTRALMKILGKGKSG) the chain is on the cytoplasmic side.

Belongs to the G-protein coupled receptor 1 family.

It localises to the cell membrane. Its function is as follows. Odorant receptor. The polypeptide is Olfactory receptor 2M7 (OR2M7) (Homo sapiens (Human)).